The following is a 388-amino-acid chain: Histone H2A.Y (388 aa).

LRR repeat units follow at residues 54–75 (SLQM…PHVP), 76–96 (SLIR…QYLR), and 100–121 (HLQT…KRLG). One can recognise an LRRCT domain in the interval 134–172 (NPVVNTNNYRNLVFNLFPSLVILDTLDKNGIDQEKAALD). The tract at residues 256–279 (RKAPASRNGGVPSKAGKGKMNAFS) is disordered.

Belongs to the histone H2A family. The nucleosome is a histone octamer containing two molecules each of H2A, H2B, H3 and H4 assembled in one H3-H4 heterotetramer and two H2A-H2B heterodimers. The octamer wraps approximately 147 bp of DNA.

The protein localises to the nucleus. It localises to the chromosome. In terms of biological role, variant histone H2A which replaces conventional H2A in a subset of nucleosomes. Nucleosomes wrap and compact DNA into chromatin, limiting DNA accessibility to the cellular machineries which require DNA as a template. Histones thereby play a central role in transcription regulation, DNA repair, DNA replication and chromosomal stability. DNA accessibility is regulated via a complex set of post-translational modifications of histones, also called histone code, and nucleosome remodeling. This is Histone H2A.Y (HTAY) from Tetrahymena thermophila (strain SB210).